A 434-amino-acid polypeptide reads, in one-letter code: MNSSAKTASAPDSFFTATLAEADPEIAAAIKGELGRQRHEIELIASENIVSRAVLEAQGSVMTNKYAEGYPGARYYGGCEWVDVAETLAIERAKKLFGAQFANVQPNSGSQMNQAVFLALLQPGDTFMGLDLAAGGHLTHGAPVNMSGKWFKAAHYTVRRDDHLIDMDEVARRAEEVKPKLIIAGGSAYSRPWDFKRFREIADSVGAYLMVDMAHFAGLVAGGVHASPVPHAHVTTTTTHKSLRGPRGGLILCNDEALAKKFNSAIFPGLQGGPLMHVIAAKAVAFGEALRPDFKIYAKNVVENAKALAESLRGNGFDIISGGTDNHLMLVDLRPKGLRGNVSEKALVRAAITCNKNGIPFDPEKPFVTSGLRLGTPAATTRGFGVAEFKQVGGLIAEVLNAIAQADDGKAPLVEAAVKEKVKALTNRFPIYQD.

(6S)-5,6,7,8-tetrahydrofolate is bound by residues Leu-132 and 136-138 (GHL). An N6-(pyridoxal phosphate)lysine modification is found at Lys-241.

Belongs to the SHMT family. In terms of assembly, homodimer. It depends on pyridoxal 5'-phosphate as a cofactor.

It is found in the cytoplasm. The enzyme catalyses (6R)-5,10-methylene-5,6,7,8-tetrahydrofolate + glycine + H2O = (6S)-5,6,7,8-tetrahydrofolate + L-serine. Its pathway is one-carbon metabolism; tetrahydrofolate interconversion. The protein operates within amino-acid biosynthesis; glycine biosynthesis; glycine from L-serine: step 1/1. Functionally, catalyzes the reversible interconversion of serine and glycine with tetrahydrofolate (THF) serving as the one-carbon carrier. This reaction serves as the major source of one-carbon groups required for the biosynthesis of purines, thymidylate, methionine, and other important biomolecules. Also exhibits THF-independent aldolase activity toward beta-hydroxyamino acids, producing glycine and aldehydes, via a retro-aldol mechanism. The sequence is that of Serine hydroxymethyltransferase from Nitrobacter hamburgensis (strain DSM 10229 / NCIMB 13809 / X14).